The following is a 400-amino-acid chain: Riboflavin biosynthesis protein RibBA (400 aa).

The DHBP synthase stretch occupies residues 1–202 (MTTFGTIEQA…IADLVMYRRR (202 aa)). D-ribulose 5-phosphate contacts are provided by residues 28–29 (RE), aspartate 33, 141–145 (RTGHT), and glutamate 165. Glutamate 29 is a Mg(2+) binding site. Position 144 (histidine 144) interacts with Mg(2+). The interval 203-400 (TEKQVELVAE…KRDRMGHLLG (198 aa)) is GTP cyclohydrolase II. GTP is bound at residue 253–257 (RAHSE). The Zn(2+) site is built by cysteine 258, cysteine 269, and cysteine 271. GTP contacts are provided by residues glutamine 274, 297–299 (EGR), and threonine 319. The active-site Proton acceptor; for GTP cyclohydrolase activity is aspartate 331. Arginine 333 functions as the Nucleophile; for GTP cyclohydrolase activity in the catalytic mechanism. Residues threonine 354 and lysine 359 each contribute to the GTP site.

The protein in the N-terminal section; belongs to the DHBP synthase family. This sequence in the C-terminal section; belongs to the GTP cyclohydrolase II family. It depends on Mg(2+) as a cofactor. Requires Mn(2+) as cofactor. The cofactor is Zn(2+).

The catalysed reaction is D-ribulose 5-phosphate = (2S)-2-hydroxy-3-oxobutyl phosphate + formate + H(+). It carries out the reaction GTP + 4 H2O = 2,5-diamino-6-hydroxy-4-(5-phosphoribosylamino)-pyrimidine + formate + 2 phosphate + 3 H(+). Its pathway is cofactor biosynthesis; riboflavin biosynthesis; 2-hydroxy-3-oxobutyl phosphate from D-ribulose 5-phosphate: step 1/1. It functions in the pathway cofactor biosynthesis; riboflavin biosynthesis; 5-amino-6-(D-ribitylamino)uracil from GTP: step 1/4. In terms of biological role, catalyzes the conversion of D-ribulose 5-phosphate to formate and 3,4-dihydroxy-2-butanone 4-phosphate. Functionally, catalyzes the conversion of GTP to 2,5-diamino-6-ribosylamino-4(3H)-pyrimidinone 5'-phosphate (DARP), formate and pyrophosphate. In Salinispora tropica (strain ATCC BAA-916 / DSM 44818 / JCM 13857 / NBRC 105044 / CNB-440), this protein is Riboflavin biosynthesis protein RibBA.